The chain runs to 486 residues: Serine/threonine-protein kinase 33 (486 aa).

The segment at Val39–Lys100 is disordered. Residues Glu41 to Phe53 are compositionally biased toward polar residues. The segment covering Pro57–Ser66 has biased composition (basic and acidic residues). Over residues Asp68 to Ser80 the composition is skewed to polar residues. The region spanning Tyr116–Leu381 is the Protein kinase domain. ATP-binding positions include Leu122–Val130 and Lys145. The active-site Proton acceptor is the Asp238. The disordered stretch occupies residues Lys402–Arg451. Ser407 carries the post-translational modification Phosphoserine. Basic and acidic residues predominate over residues Thr413 to Lys426. A compositionally biased stretch (polar residues) spans Tyr428 to Ser440.

Belongs to the protein kinase superfamily. CAMK Ser/Thr protein kinase family. CaMK subfamily. In terms of assembly, interacts with vimentin/VIM. Post-translationally, autophosphorylated.

The protein localises to the cytoplasm. It localises to the perinuclear region. The enzyme catalyses L-seryl-[protein] + ATP = O-phospho-L-seryl-[protein] + ADP + H(+). It carries out the reaction L-threonyl-[protein] + ATP = O-phospho-L-threonyl-[protein] + ADP + H(+). Serine/threonine protein kinase which phosphorylates vimentin/VIM. Therefore may play a specific role in the dynamic behavior of the intermediate filament cytoskeleton. In Bos taurus (Bovine), this protein is Serine/threonine-protein kinase 33 (STK33).